The following is a 121-amino-acid chain: Small ribosomal subunit protein uS13 (121 aa).

The interval 88–121 is disordered; the sequence is GMRHRRGLPTRGQNTKNNARTRKGPAKSIAGKKK. Residues 106-121 are compositionally biased toward basic residues; sequence ARTRKGPAKSIAGKKK.

The protein belongs to the universal ribosomal protein uS13 family. As to quaternary structure, part of the 30S ribosomal subunit. Forms a loose heterodimer with protein S19. Forms two bridges to the 50S subunit in the 70S ribosome.

In terms of biological role, located at the top of the head of the 30S subunit, it contacts several helices of the 16S rRNA. In the 70S ribosome it contacts the 23S rRNA (bridge B1a) and protein L5 of the 50S subunit (bridge B1b), connecting the 2 subunits; these bridges are implicated in subunit movement. Contacts the tRNAs in the A and P-sites. The protein is Small ribosomal subunit protein uS13 of Lactococcus lactis subsp. cremoris (strain MG1363).